A 114-amino-acid polypeptide reads, in one-letter code: Large ribosomal subunit protein bL19 (114 aa).

The protein belongs to the bacterial ribosomal protein bL19 family.

Functionally, this protein is located at the 30S-50S ribosomal subunit interface and may play a role in the structure and function of the aminoacyl-tRNA binding site. In Listeria innocua serovar 6a (strain ATCC BAA-680 / CLIP 11262), this protein is Large ribosomal subunit protein bL19 (rplS).